Consider the following 423-residue polypeptide: CinA-like protein (423 aa).

This sequence belongs to the CinA family.

The sequence is that of CinA-like protein from Chlorobaculum tepidum (strain ATCC 49652 / DSM 12025 / NBRC 103806 / TLS) (Chlorobium tepidum).